A 938-amino-acid polypeptide reads, in one-letter code: Glutamate receptor 3.1 (938 aa).

An N-terminal signal peptide occupies residues 1–20 (MKFIFYLFSIFCCLCSCAQS). The Extracellular portion of the chain corresponds to 21-588 (QNISGRPDAV…GGWAFLQPFT (568 aa)). Asparagine 22, asparagine 39, asparagine 59, asparagine 340, asparagine 418, asparagine 436, and asparagine 551 each carry an N-linked (GlcNAc...) asparagine glycan. A helical transmembrane segment spans residues 589-609 (IKMWTVTGLFFLIIGTVVWML). Residues 610 to 618 (EHRINDEFR) lie on the Cytoplasmic side of the membrane. A helical transmembrane segment spans residues 619–639 (GPPAKQLITVFWFSFSTLFFA). Residues 640 to 650 (HREDTRSTLGR) are Cytoplasmic-facing. A helical membrane pass occupies residues 651-671 (FVIIIWLFVVLIIQSSYTASL). The Extracellular segment spans residues 672–830 (TSILTVQQLT…ELDQDPDRLD (159 aa)). The helical transmembrane segment at 831–851 (VYSFSALFLICGLACIFALAI) threads the bilayer. The Cytoplasmic segment spans residues 852 to 938 (HACNLFYQYS…SGSGSTTASC (87 aa)). The disordered stretch occupies residues 906–938 (AAKEKASGLGGSGGSMSGVSFTSSGSGSTTASC). The span at 922–938 (SGVSFTSSGSGSTTASC) shows a compositional bias: low complexity.

The protein belongs to the glutamate-gated ion channel (TC 1.A.10.1) family. May form homomultimers. In terms of tissue distribution, expressed at low levels in roots and leaves.

The protein localises to the membrane. Glutamate-gated receptor that probably acts as a non-selective cation channel. Involved in root development. May regulate cell proliferation and cell death in the root apex. This Oryza sativa subsp. japonica (Rice) protein is Glutamate receptor 3.1 (GLR3.1).